A 152-amino-acid chain; its full sequence is UPF0336 protein Tfu_2666 (152 aa).

Residues Tyr7–Ala116 enclose the MaoC-like domain.

This sequence belongs to the UPF0336 family.

In Thermobifida fusca (strain YX), this protein is UPF0336 protein Tfu_2666.